Here is a 410-residue protein sequence, read N- to C-terminus: Peptidase T (410 aa).

His79 is a Zn(2+) binding site. Asp81 is an active-site residue. Asp142 lines the Zn(2+) pocket. Glu176 (proton acceptor) is an active-site residue. Glu177, Asp199, and His381 together coordinate Zn(2+).

The protein belongs to the peptidase M20B family. The cofactor is Zn(2+).

It is found in the cytoplasm. It carries out the reaction Release of the N-terminal residue from a tripeptide.. Cleaves the N-terminal amino acid of tripeptides. The protein is Peptidase T of Listeria monocytogenes serotype 4b (strain F2365).